The following is a 235-amino-acid chain: Chromosome partition protein MukE (235 aa).

The tract at residues 204-235 (QQEPSQSSLLDGFDADDTGHHDSELTMQEGEV) is disordered.

The protein belongs to the MukE family. Interacts, and probably forms a ternary complex, with MukF and MukB. The complex formation is stimulated by calcium or magnesium.

It localises to the cytoplasm. The protein resides in the nucleoid. Involved in chromosome condensation, segregation and cell cycle progression. May participate in facilitating chromosome segregation by condensation DNA from both sides of a centrally located replisome during cell division. Probably acts via its interaction with MukB and MukF. This is Chromosome partition protein MukE from Photobacterium profundum (strain SS9).